The chain runs to 169 residues: Oleosin Ara h 10.0101 (169 aa).

A run of 2 helical transmembrane segments spans residues 39–59 (VIAV…AGLA) and 73–93 (LFIL…LSVA). Over residues 146–156 (KDVGQKTKEVG) the composition is skewed to basic and acidic residues. Positions 146 to 169 (KDVGQKTKEVGQEIQTKAQDSKRT) are disordered.

Belongs to the oleosin family. In terms of tissue distribution, expressed in seeds (at protein level).

The protein localises to the lipid droplet. Its subcellular location is the membrane. Its function is as follows. May have a structural role to stabilize the lipid body during desiccation of the seed by preventing coalescence of the oil. Probably interacts with both lipid and phospholipid moieties of lipid bodies. May also provide recognition signals for specific lipase anchorage in lipolysis during seedling growth. The polypeptide is Oleosin Ara h 10.0101 (Arachis hypogaea (Peanut)).